Consider the following 531-residue polypeptide: Flavin-containing monooxygenase 3 (531 aa).

FAD contacts are provided by residues 9-13 (GAGIS), glutamate 32, 40-41 (LW), and 61-62 (NS). Residues 60–61 (TN) and 195–198 (SGCD) each bind NADP(+). Residues 511 to 531 (FSPWLKLLAIAVLLIAAVLVF) form a helical membrane-spanning segment.

Belongs to the FMO family. FAD serves as cofactor. In terms of tissue distribution, liver.

The protein resides in the microsome membrane. It is found in the endoplasmic reticulum membrane. It catalyses the reaction trimethylamine + NADPH + O2 = trimethylamine N-oxide + NADP(+) + H2O. It carries out the reaction N,N-dimethylaniline + NADPH + O2 + H(+) = N,N-dimethylaniline N-oxide + NADP(+) + H2O. The enzyme catalyses hypotaurine + NADPH + O2 + H(+) = taurine + NADP(+) + H2O. The catalysed reaction is (S)-nicotine + NADPH + O2 = trans-(S)-nicotine N(1')-oxide + NADP(+) + H2O. It catalyses the reaction albendazole + NADPH + O2 + H(+) = albendazole S-oxide + NADP(+) + H2O. In terms of biological role, essential hepatic enzyme that catalyzes the oxygenation of a wide variety of nitrogen- and sulfur-containing compounds including drugs as well as dietary compounds. Plays an important role in the metabolism of trimethylamine (TMA), via the production of trimethylamine N-oxide (TMAO) metabolite. TMA is generated by the action of gut microbiota using dietary precursors such as choline, choline containing compounds, betaine or L-carnitine. By regulating TMAO concentration, FMO3 directly impacts both platelet responsiveness and rate of thrombus formation. The sequence is that of Flavin-containing monooxygenase 3 (FMO3) from Oryctolagus cuniculus (Rabbit).